A 1375-amino-acid polypeptide reads, in one-letter code: Protein lingerer (1375 aa).

The segment at 1 to 69 (MSTQTRSGGG…KAQPKATTEQ (69 aa)) is disordered. Residues 53–62 (SKTDKPEKAQ) show a composition bias toward basic and acidic residues. The UBA domain occupies 84-124 (QINEKVLLLLTMTQRSEEEVCCALNECDYDLEAAANFLIEE). 2 stretches are compositionally biased toward low complexity: residues 142–161 (ANNT…GNGN) and 173–184 (SNRGGTRGSSDS). A disordered region spans residues 142–286 (ANNTADGAAG…GSGRGGNANE (145 aa)). A compositionally biased stretch (basic and acidic residues) spans 185 to 204 (RGWRGRETRENERNQRESRE). A compositionally biased stretch (gly residues) spans 228-282 (RNGGGRSGPGGGGRGGGFVSRSGRGGGRMGGRTGGPRGDRGSGGPGGAYGSGRGG). Tyrosine 321 bears the Phosphotyrosine mark. Serine 324 is subject to Phosphoserine. 2 stretches are compositionally biased toward polar residues: residues 374–387 (VQQG…SSSG) and 395–412 (ATLS…SAAV). Disordered regions lie at residues 374–453 (VQQG…ASPD) and 613–646 (FEPL…QQQQ). Residues 426–441 (SGAGTGASAAAGGGAG) are compositionally biased toward gly residues. 2 stretches are compositionally biased toward low complexity: residues 442 to 453 (STPSSFVSASPD) and 629 to 646 (QQQQ…QQQQ). Serine 672 carries the phosphoserine modification. The residue at position 673 (threonine 673) is a Phosphothreonine. Serine 674 carries the phosphoserine modification. Residues 750-767 (QGYGSYQPSSYQQQAGSG) are compositionally biased toward low complexity. Disordered regions lie at residues 750–801 (QGYG…SGNA), 869–894 (SVST…GQTG), 987–1036 (KNTS…GGSG), 1203–1234 (SKGG…DLTS), and 1251–1277 (EKQS…TSAQ). Positions 768–781 (AQSGTGAVSGGGGT) are enriched in gly residues. 3 stretches are compositionally biased toward low complexity: residues 789–801 (GGSS…SGNA), 869–882 (SVST…NSGS), and 987–1008 (KNTS…TGNA). Residues 1009-1036 (SGQGAGASTGGVGSSSGAGGAGSGGGSG) are compositionally biased toward gly residues. Residues 1265 to 1277 (MPNTQTAGGTSAQ) show a composition bias toward polar residues.

In terms of tissue distribution, at stage 11, expression is restricted to the neuroblasts, predominant in the central nervous system (CNS), including the brain and ventral nerve cord, and in the PNS. Later embryonic expression is seen in the gonads. Late third instar larvae show expression in the CNS, imaginal disks (including genital, eye-antennal, leg, wing and haltere disks), and gonads. In the larval brain, it is expressed in all of the glial cells and in clusters of neurons that projected contralaterally. In the larval ventral ganglion, it is expressed in subperineurial glia, peripheral exit glia, and a number of interneurons, but not in motor neurons. Isoform B is abundantly expressed in males and females. Isoform D is male specific and expressed at low levels.

It localises to the cytoplasm. Functionally, acts in the nervous system to mediate the control of copulatory organs during courtship. In Drosophila melanogaster (Fruit fly), this protein is Protein lingerer.